The primary structure comprises 163 residues: E3 ubiquitin-protein ligase ATL23 (163 aa).

A helical membrane pass occupies residues A35–W55. The segment at C104 to R146 adopts an RING-type; atypical zinc-finger fold.

It belongs to the RING-type zinc finger family. ATL subfamily.

Its subcellular location is the membrane. It catalyses the reaction S-ubiquitinyl-[E2 ubiquitin-conjugating enzyme]-L-cysteine + [acceptor protein]-L-lysine = [E2 ubiquitin-conjugating enzyme]-L-cysteine + N(6)-ubiquitinyl-[acceptor protein]-L-lysine.. Its pathway is protein modification; protein ubiquitination. Functionally, E3 ubiquitin-protein ligase able to catalyze polyubiquitination with ubiquitin-conjugating enzyme E2 UBC8, UBC10, UBC11, UBC28 and UBC29 in vitro. The protein is E3 ubiquitin-protein ligase ATL23 (ATL23) of Arabidopsis thaliana (Mouse-ear cress).